Here is a 303-residue protein sequence, read N- to C-terminus: Probable 5-dehydro-4-deoxyglucarate dehydratase (303 aa).

It belongs to the DapA family.

It catalyses the reaction 5-dehydro-4-deoxy-D-glucarate + H(+) = 2,5-dioxopentanoate + CO2 + H2O. Its pathway is carbohydrate acid metabolism; D-glucarate degradation; 2,5-dioxopentanoate from D-glucarate: step 2/2. This Azotobacter vinelandii (strain DJ / ATCC BAA-1303) protein is Probable 5-dehydro-4-deoxyglucarate dehydratase.